The following is a 31-amino-acid chain: AGTKEWLNKAKDFIKEKGLGMLSAAANAALN.

The protein belongs to the ponericin-G family. In terms of tissue distribution, expressed by the venom gland.

It is found in the secreted. The protein resides in the target cell membrane. Membrane-perturbating peptide with a few moderate activities. It is insecticidal, since it induces reversible paralysis in insects (L.cuprina) after 1 hour, but fails to kill them. It is also antiparasitic, since it moderately inhibits the larval development of the major pathogenic nematode of ruminants (H.contortus, IC(50)=23.2 uM) and reduces the motility of adult males of the other nematode B.malayi. It does not show antibacterial activity (MIC&gt;40 uM). It is not cytotoxic to HEK293 cells and does not induce hemolysis in human erythrocytes. It does not cause an increase in intracellular calcium concentration on neuronal and epithelial cell lines. The protein is M-poneritoxin-Nc3b of Neoponera commutata (Large hunting ant).